The primary structure comprises 136 residues: uncharacterized protein (136 aa).

This is an uncharacterized protein from Mycoplasma pneumoniae (strain ATCC 29342 / M129 / Subtype 1) (Mycoplasmoides pneumoniae).